The primary structure comprises 88 residues: Small ribosomal subunit protein uS17 (88 aa).

The protein belongs to the universal ribosomal protein uS17 family. In terms of assembly, part of the 30S ribosomal subunit.

Functionally, one of the primary rRNA binding proteins, it binds specifically to the 5'-end of 16S ribosomal RNA. The polypeptide is Small ribosomal subunit protein uS17 (Oenococcus oeni (strain ATCC BAA-331 / PSU-1)).